The primary structure comprises 115 residues: UPF0122 protein NT01CX_2214 (115 aa).

Belongs to the UPF0122 family.

Might take part in the signal recognition particle (SRP) pathway. This is inferred from the conservation of its genetic proximity to ftsY/ffh. May be a regulatory protein. This is UPF0122 protein NT01CX_2214 from Clostridium novyi (strain NT).